The following is a 405-amino-acid chain: LanC-like protein GCL2 (405 aa).

Residues Cys278, Cys323, and His324 each coordinate Zn(2+).

This sequence belongs to the LanC-like protein family.

Its function is as follows. May play a role in signaling. May be not involved in abscisic acid (ABA) signaling. The protein is LanC-like protein GCL2 (GCL2) of Arabidopsis thaliana (Mouse-ear cress).